The sequence spans 290 residues: Ribosomal RNA small subunit methyltransferase A (290 aa).

S-adenosyl-L-methionine contacts are provided by Asn-27, Leu-29, Gly-54, Glu-75, Asp-100, and Asn-125.

Belongs to the class I-like SAM-binding methyltransferase superfamily. rRNA adenine N(6)-methyltransferase family. RsmA subfamily.

It is found in the cytoplasm. The catalysed reaction is adenosine(1518)/adenosine(1519) in 16S rRNA + 4 S-adenosyl-L-methionine = N(6)-dimethyladenosine(1518)/N(6)-dimethyladenosine(1519) in 16S rRNA + 4 S-adenosyl-L-homocysteine + 4 H(+). Its function is as follows. Specifically dimethylates two adjacent adenosines (A1518 and A1519) in the loop of a conserved hairpin near the 3'-end of 16S rRNA in the 30S particle. May play a critical role in biogenesis of 30S subunits. The protein is Ribosomal RNA small subunit methyltransferase A of Streptococcus pneumoniae (strain Hungary19A-6).